Reading from the N-terminus, the 227-residue chain is Translation initiation factor 6 (227 aa).

Belongs to the eIF-6 family.

Functionally, binds to the 50S ribosomal subunit and prevents its association with the 30S ribosomal subunit to form the 70S initiation complex. This chain is Translation initiation factor 6, found in Pyrococcus furiosus (strain ATCC 43587 / DSM 3638 / JCM 8422 / Vc1).